An 87-amino-acid polypeptide reads, in one-letter code: Alpha-toxin To2 (87 aa).

An N-terminal signal peptide occupies residues 1 to 20 (MIRFVLFISCFFLIGTVVEC). The LCN-type CS-alpha/beta domain maps to 22 to 84 (KDGYLMEGDG…IWDSKNNKCG (63 aa)). Intrachain disulfides connect Cys32–Cys83, Cys36–Cys58, Cys44–Cys64, and Cys48–Cys66. Lys85 bears the Lysine amide mark.

In terms of tissue distribution, expressed by the venom gland.

The protein localises to the secreted. Alpha toxins bind voltage-independently at site-3 of sodium channels (Nav) and inhibit the inactivation of the activated channels, thereby blocking neuronal transmission. Affects the tetrodotoxin-sensitive sodium current permeability of F-11 rat neuroblastoma cells. Produces a dose dependent increase in amplitude and duration of the current. The chain is Alpha-toxin To2 from Tityus obscurus (Amazonian scorpion).